The chain runs to 561 residues: Microtubule-associated protein VP6 (561 aa).

Interacts with VP2.

It localises to the virion. It is found in the host cytoplasm. Its subcellular location is the host cytoskeleton. Functionally, minor inner capsid component. Displays NTPase and RNA 5'-triphosphatase (RTPase) activities. May function as a cofactor of polymerase VP2. Associates with microtubules and plays a role in the formation, structural organization and morphology of viral inclusions, where the assembly of cores and the replication of viral RNA occur. In Lymantria dispar cypovirus 1 (isolate Rao) (LdCPV-1), this protein is Microtubule-associated protein VP6 (S6).